The following is a 121-amino-acid chain: Basic phospholipase A2 caudoxin (121 aa).

7 disulfide bridges follow: C25/C114, C27/C43, C42/C94, C48/C121, C49/C87, C56/C80, and C74/C85. 3 residues coordinate Ca(2+): Y26, G28, and G30. H46 is an active-site residue. D47 lines the Ca(2+) pocket. The active site involves D88.

The protein belongs to the phospholipase A2 family. Group II subfamily. D49 sub-subfamily. As to quaternary structure, monomer. It depends on Ca(2+) as a cofactor. Expressed by the venom gland.

It localises to the secreted. It carries out the reaction a 1,2-diacyl-sn-glycero-3-phosphocholine + H2O = a 1-acyl-sn-glycero-3-phosphocholine + a fatty acid + H(+). Snake venom phospholipase A2 (PLA2) that shows anticoagulant activity and presynaptic neurotoxicity. Acts as an anticoagulant toxin by inhibiting prothrombinase complex formation. Shows about 50% of the prothrombinase complex inhibition compared to CM-IV of N.nigricollis venom. Acts as a neurotoxin by inhibiting neuromuscular transmission by blocking acetylcholine release from the nerve termini. PLA2 catalyzes the calcium-dependent hydrolysis of the 2-acyl groups in 3-sn-phosphoglycerides. This is Basic phospholipase A2 caudoxin from Bitis caudalis (Horned adder).